A 129-amino-acid chain; its full sequence is Follitropin subunit beta (129 aa).

The first 18 residues, 1–18, serve as a signal peptide directing secretion; the sequence is MKSIQFCFFFCCWKAICC. 6 disulfides stabilise this stretch: cysteine 21/cysteine 69, cysteine 35/cysteine 84, cysteine 38/cysteine 122, cysteine 46/cysteine 100, cysteine 50/cysteine 102, and cysteine 105/cysteine 112. 2 N-linked (GlcNAc...) asparagine glycosylation sites follow: asparagine 25 and asparagine 42.

This sequence belongs to the glycoprotein hormones subunit beta family. As to quaternary structure, heterodimer. The active follitropin is a heterodimer composed of an alpha chain/CGA shared with other hormones and a unique beta chain/FSHB shown here.

The protein localises to the secreted. Together with the alpha chain CGA constitutes follitropin, the follicle-stimulating hormone, and provides its biological specificity to the hormone heterodimer. Binds FSHR, a G protein-coupled receptor, on target cells to activate downstream signaling pathways. Follitropin is involved in follicle development and spermatogenesis in reproductive organs. This chain is Follitropin subunit beta (FSHB), found in Cavia porcellus (Guinea pig).